Here is a 502-residue protein sequence, read N- to C-terminus: Lysine--tRNA ligase (502 aa).

Positions 399 and 406 each coordinate Mg(2+).

It belongs to the class-II aminoacyl-tRNA synthetase family. As to quaternary structure, homodimer. Mg(2+) serves as cofactor.

Its subcellular location is the cytoplasm. The catalysed reaction is tRNA(Lys) + L-lysine + ATP = L-lysyl-tRNA(Lys) + AMP + diphosphate. This Synechococcus sp. (strain RCC307) protein is Lysine--tRNA ligase.